The sequence spans 140 residues: Transmembrane protein 107 (140 aa).

Helical transmembrane passes span 7–27 (LVPSRFLTLLAHLVIVITLFW) and 53–73 (LVAALCLTLGLFAVELAGFLS). An N-linked (GlcNAc...) asparagine glycan is attached at asparagine 79. Transmembrane regions (helical) follow at residues 83–103 (SLLSIAAHCSASVALSFFIFE) and 113–133 (IFAFCSAFPAVTETALFIAVF).

As to quaternary structure, part of the tectonic-like complex (also named B9 complex). Interacts with TMEM237, TMEM231, MKS1 and TMEM216.

It is found in the membrane. It localises to the cell projection. The protein resides in the cilium. Functionally, plays a role in cilia formation and embryonic patterning. Requires for normal Sonic hedgehog (Shh) signaling in the neural tube and acts in combination with GLI2 and GLI3 to pattern ventral and intermediate neuronal cell types. During ciliogenesis regulates the ciliary transition zone localization of some MKS complex proteins. This chain is Transmembrane protein 107, found in Rattus norvegicus (Rat).